A 737-amino-acid chain; its full sequence is Polyribonucleotide nucleotidyltransferase (737 aa).

Residues D489 and D495 each contribute to the Mg(2+) site. The region spanning 556 to 615 (PKIDTIKIDVDKIKIVIGKGGETIDKIIAETGVKIDIDEEGNVSIYSSDQDAINRAKEII) is the KH domain. An S1 motif domain is found at 625 to 693 (DEVYRAKVVR…EKGRIDASMK (69 aa)). A disordered region spans residues 691 to 737 (SMKALLPRPPKPEHDEKGEKSERPHRPRHHKDHKPKKEFTETPKDSE). The span at 700-714 (PKPEHDEKGEKSERP) shows a compositional bias: basic and acidic residues. The segment covering 715–724 (HRPRHHKDHK) has biased composition (basic residues). The span at 725-737 (PKKEFTETPKDSE) shows a compositional bias: basic and acidic residues.

It belongs to the polyribonucleotide nucleotidyltransferase family. It depends on Mg(2+) as a cofactor.

The protein resides in the cytoplasm. The catalysed reaction is RNA(n+1) + phosphate = RNA(n) + a ribonucleoside 5'-diphosphate. In terms of biological role, involved in mRNA degradation. Catalyzes the phosphorolysis of single-stranded polyribonucleotides processively in the 3'- to 5'-direction. In Streptococcus pneumoniae (strain ATCC 700669 / Spain 23F-1), this protein is Polyribonucleotide nucleotidyltransferase.